The sequence spans 339 residues: Phenylalanine--tRNA ligase alpha subunit (339 aa).

E253 contributes to the Mg(2+) binding site.

It belongs to the class-II aminoacyl-tRNA synthetase family. Phe-tRNA synthetase alpha subunit type 1 subfamily. In terms of assembly, tetramer of two alpha and two beta subunits. The cofactor is Mg(2+).

The protein localises to the cytoplasm. The catalysed reaction is tRNA(Phe) + L-phenylalanine + ATP = L-phenylalanyl-tRNA(Phe) + AMP + diphosphate + H(+). This is Phenylalanine--tRNA ligase alpha subunit from Alcanivorax borkumensis (strain ATCC 700651 / DSM 11573 / NCIMB 13689 / SK2).